Here is a 248-residue protein sequence, read N- to C-terminus: Cutinase cut1 (248 aa).

A signal peptide spans 1-17; it reads MRSLSLFTALLAGQAFA. Cysteine 79 and cysteine 153 are disulfide-bonded. The Nucleophile role is filled by serine 164. Cysteine 212 and cysteine 219 form a disulfide bridge. Residue aspartate 216 is part of the active site. The active-site Proton donor/acceptor is the histidine 229.

It belongs to the cutinase family. In terms of processing, the 2 disulfide bonds play a critical role in holding the catalytic residues in juxta-position; reduction of the disulfide bridges results in the complete inactivation of the enzyme.

The protein resides in the secreted. It catalyses the reaction cutin + H2O = cutin monomers.. Its function is as follows. Catalyzes the hydrolysis of complex carboxylic polyesters found in the cell wall of plants. May degrade cutin, a macromolecule that forms the structure of the plant cuticle. May also degrade suberin, a specialized macromolecule found in the cell wall of various plant tissues. The sequence is that of Cutinase cut1 from Trichoderma harzianum (Hypocrea lixii).